A 426-amino-acid polypeptide reads, in one-letter code: 3-phosphoshikimate 1-carboxyvinyltransferase (426 aa).

Residues Lys23, Ser24, and Arg28 each contribute to the 3-phosphoshikimate site. Lys23 is a phosphoenolpyruvate binding site. The phosphoenolpyruvate site is built by Gly96 and Arg124. Thr170, Ser171, Gln172, Ser198, Asp314, and Lys341 together coordinate 3-phosphoshikimate. A phosphoenolpyruvate-binding site is contributed by Gln172. Catalysis depends on Asp314, which acts as the Proton acceptor. 3 residues coordinate phosphoenolpyruvate: Arg345, Arg386, and Lys411.

Belongs to the EPSP synthase family. In terms of assembly, monomer.

Its subcellular location is the cytoplasm. The enzyme catalyses 3-phosphoshikimate + phosphoenolpyruvate = 5-O-(1-carboxyvinyl)-3-phosphoshikimate + phosphate. The protein operates within metabolic intermediate biosynthesis; chorismate biosynthesis; chorismate from D-erythrose 4-phosphate and phosphoenolpyruvate: step 6/7. In terms of biological role, catalyzes the transfer of the enolpyruvyl moiety of phosphoenolpyruvate (PEP) to the 5-hydroxyl of shikimate-3-phosphate (S3P) to produce enolpyruvyl shikimate-3-phosphate and inorganic phosphate. In Nostoc punctiforme (strain ATCC 29133 / PCC 73102), this protein is 3-phosphoshikimate 1-carboxyvinyltransferase.